The sequence spans 193 residues: Hydroxyacylglutathione hydrolase-like protein (193 aa).

5 residues coordinate Zn(2+): His54, His56, Asp58, His59, and His110.

It belongs to the metallo-beta-lactamase superfamily. Glyoxalase II family. The cofactor is Zn(2+).

In terms of biological role, hydrolase acting on ester bonds. The sequence is that of Hydroxyacylglutathione hydrolase-like protein (HAGHL) from Bos taurus (Bovine).